The following is a 482-amino-acid chain: High affinity 3',5'-cyclic-AMP phosphodiesterase 7A (482 aa).

Ser84 is subject to Phosphoserine. The PDEase domain occupies 136–458 (LDDDYNGQAK…ASWKGLQREQ (323 aa)). His212 acts as the Proton donor in catalysis. 4 residues coordinate a divalent metal cation: His216, His252, Asp253, and Asp362.

It belongs to the cyclic nucleotide phosphodiesterase family. PDE7 subfamily. As to quaternary structure, interacts with CBFA2T3. It depends on a divalent metal cation as a cofactor. Found at high levels in skeletal muscle and at low levels in a variety of tissues including brain and heart. It is expressed as well in two T-cell lines. In terms of tissue distribution, found abundantly in skeletal muscle and at low levels in heart.

The protein localises to the cytoplasm. The protein resides in the cytosol. The catalysed reaction is 3',5'-cyclic AMP + H2O = AMP + H(+). It functions in the pathway purine metabolism; 3',5'-cyclic AMP degradation; AMP from 3',5'-cyclic AMP: step 1/1. Insensitive to all selective PDE inhibitors. In terms of biological role, hydrolyzes the second messenger cAMP, which is a key regulator of many important physiological processes. May have a role in muscle signal transduction. The chain is High affinity 3',5'-cyclic-AMP phosphodiesterase 7A from Homo sapiens (Human).